A 387-amino-acid chain; its full sequence is 8-amino-7-oxononanoate synthase (387 aa).

Arg20 provides a ligand contact to substrate. 107-108 contacts pyridoxal 5'-phosphate; sequence GY. His132 provides a ligand contact to substrate. The pyridoxal 5'-phosphate site is built by Ser181, His209, and Thr238. Lys241 bears the N6-(pyridoxal phosphate)lysine mark. Thr355 contributes to the substrate binding site.

This sequence belongs to the class-II pyridoxal-phosphate-dependent aminotransferase family. BioF subfamily. In terms of assembly, homodimer. Pyridoxal 5'-phosphate is required as a cofactor.

The catalysed reaction is 6-carboxyhexanoyl-[ACP] + L-alanine + H(+) = (8S)-8-amino-7-oxononanoate + holo-[ACP] + CO2. It participates in cofactor biosynthesis; biotin biosynthesis. In terms of biological role, catalyzes the decarboxylative condensation of pimeloyl-[acyl-carrier protein] and L-alanine to produce 8-amino-7-oxononanoate (AON), [acyl-carrier protein], and carbon dioxide. This Dechloromonas aromatica (strain RCB) protein is 8-amino-7-oxononanoate synthase.